The following is a 385-amino-acid chain: S-adenosylmethionine synthase (385 aa).

An ATP-binding site is contributed by histidine 15. A Mg(2+)-binding site is contributed by aspartate 17. A K(+)-binding site is contributed by glutamate 43. 2 residues coordinate L-methionine: glutamate 56 and glutamine 99. A flexible loop region spans residues 99–109; that stretch reads QSPDINQGVDR. ATP-binding positions include 164–166, 230–231, aspartate 239, 245–246, alanine 262, and lysine 266; these read DAK, RF, and RK. Residue aspartate 239 participates in L-methionine binding. Lysine 270 serves as a coordination point for L-methionine.

This sequence belongs to the AdoMet synthase family. In terms of assembly, homotetramer; dimer of dimers. It depends on Mg(2+) as a cofactor. K(+) is required as a cofactor.

It is found in the cytoplasm. It catalyses the reaction L-methionine + ATP + H2O = S-adenosyl-L-methionine + phosphate + diphosphate. It participates in amino-acid biosynthesis; S-adenosyl-L-methionine biosynthesis; S-adenosyl-L-methionine from L-methionine: step 1/1. In terms of biological role, catalyzes the formation of S-adenosylmethionine (AdoMet) from methionine and ATP. The overall synthetic reaction is composed of two sequential steps, AdoMet formation and the subsequent tripolyphosphate hydrolysis which occurs prior to release of AdoMet from the enzyme. The polypeptide is S-adenosylmethionine synthase (Sodalis glossinidius (strain morsitans)).